The sequence spans 445 residues: Trigger factor (445 aa).

Residues 162-247 (GDQVTIDAIG…IKAVHTAEPT (86 aa)) enclose the PPIase FKBP-type domain.

It belongs to the FKBP-type PPIase family. Tig subfamily.

Its subcellular location is the cytoplasm. The enzyme catalyses [protein]-peptidylproline (omega=180) = [protein]-peptidylproline (omega=0). Functionally, involved in protein export. Acts as a chaperone by maintaining the newly synthesized protein in an open conformation. Functions as a peptidyl-prolyl cis-trans isomerase. This Rickettsia rickettsii (strain Sheila Smith) protein is Trigger factor.